Consider the following 821-residue polypeptide: Putative outer membrane usher protein YqiG (821 aa).

An N-terminal signal peptide occupies residues 1-20 (MSGNIGANPVIIIGCASAYA). Cysteine 798 and cysteine 817 form a disulfide bridge.

It belongs to the fimbrial export usher family.

Its subcellular location is the cell outer membrane. In terms of biological role, may be involved in H(2) production during fermentative growth. Involved in the export and assembly of a fimbrial subunit across the outer membrane. This chain is Putative outer membrane usher protein YqiG (yqiG), found in Escherichia coli (strain K12).